We begin with the raw amino-acid sequence, 441 residues long: Arginine biosynthesis bifunctional protein ArgJ, mitochondrial (441 aa).

The transit peptide at 1-8 (MRISSTLL) directs the protein to the mitochondrion. Residues Thr177, Lys204, Thr215, Glu301, Asn436, and Ser441 each coordinate substrate. Thr215 functions as the Nucleophile in the catalytic mechanism.

The protein belongs to the ArgJ family. Heterodimer of an alpha and a beta chain. Post-translationally, the alpha and beta chains are autoproteolytically processed from a single precursor protein within the mitochondrion.

The protein localises to the mitochondrion matrix. It carries out the reaction N(2)-acetyl-L-ornithine + L-glutamate = N-acetyl-L-glutamate + L-ornithine. It catalyses the reaction L-glutamate + acetyl-CoA = N-acetyl-L-glutamate + CoA + H(+). It participates in amino-acid biosynthesis; L-arginine biosynthesis; L-ornithine and N-acetyl-L-glutamate from L-glutamate and N(2)-acetyl-L-ornithine (cyclic): step 1/1. The protein operates within amino-acid biosynthesis; L-arginine biosynthesis; N(2)-acetyl-L-ornithine from L-glutamate: step 1/4. With respect to regulation, inhibited by ornithine. Functionally, catalyzes two activities which are involved in the cyclic version of arginine biosynthesis: the synthesis of acetylglutamate from glutamate and acetyl-CoA, and of ornithine by transacetylation between acetylornithine and glutamate. This Saccharomyces cerevisiae (strain ATCC 204508 / S288c) (Baker's yeast) protein is Arginine biosynthesis bifunctional protein ArgJ, mitochondrial.